The following is a 566-amino-acid chain: Putative ABC transporter ATP-binding protein BCE_2668 (566 aa).

ABC transporter domains lie at 5–246 and 300–533; these read ISFE…GLRE and LKVE…ANLK. Residues 39 to 46 and 333 to 340 each bind ATP; these read GRSGSGKS and GHNGAGKS.

The protein belongs to the ABC transporter superfamily.

Its subcellular location is the cell membrane. Probably part of an ABC transporter complex. Responsible for energy coupling to the transport system. The polypeptide is Putative ABC transporter ATP-binding protein BCE_2668 (Bacillus cereus (strain ATCC 10987 / NRS 248)).